The primary structure comprises 385 residues: Acyl-CoA dehydrogenase IpdE1 (385 aa).

Residues 126 to 129 and S161 each bind FAD; that span reads QGYS. The Proton acceptor role is filled by E244. Residue 364–366 participates in FAD binding; that stretch reads SNE.

The protein belongs to the acyl-CoA dehydrogenase family. In terms of assembly, heterotetramer composed of 2 IpdE1 subunits and 2 IpdE2 subunits. Requires FAD as cofactor.

The catalysed reaction is 3-[(3aS,4S,5R,7aS)-5-hydroxy-7a-methyl-1-oxo-octahydro-1H-inden-4-yl]propanoyl-CoA + A = (2E)-3-[(3aS,4S,5R,7aS)-5-hydroxy-7a-methyl-1-oxo-octahydro-1H-inden-4-yl]prop-2-enoyl-CoA + AH2. The protein operates within steroid metabolism; cholesterol degradation. Its function is as follows. Involved in cholesterol degradation. Catalyzes the dehydrogenation of 5OH-HIP-CoA to 5OH-HIPE-CoA. Can also use octanoyl-CoA and dihydroferuloyl-CoA, with lower efficiency. Cannot use 3-oxo-4-pregnene-20-carboxyl-CoA (3-OPC-CoA). The protein is Acyl-CoA dehydrogenase IpdE1 of Mycobacterium tuberculosis (strain ATCC 25618 / H37Rv).